The following is a 263-amino-acid chain: Syntaxin-73 (263 aa).

Residues M1 to N240 lie on the Cytoplasmic side of the membrane. S12 carries the post-translational modification Phosphoserine. The 63-residue stretch at Y169–T231 folds into the t-SNARE coiled-coil homology domain. Residues F241–S261 form a helical; Anchor for type IV membrane protein membrane-spanning segment. Residues V262 to K263 are Vesicular-facing.

It belongs to the syntaxin family. In terms of assembly, part of the t-SNARE complex. As to expression, expressed in root, leaf, stem, flower and silique.

Its subcellular location is the membrane. Functionally, vesicle trafficking protein that functions in the secretory pathway. This is Syntaxin-73 (SYP73) from Arabidopsis thaliana (Mouse-ear cress).